Here is a 178-residue protein sequence, read N- to C-terminus: Interleukin-10 (178 aa).

A signal peptide spans 1-18; sequence MHSSALLCCLVLLTGVRA. 2 disulfide bridges follow: cysteine 30–cysteine 126 and cysteine 80–cysteine 132. Asparagine 134 carries N-linked (GlcNAc...) asparagine glycosylation.

Belongs to the IL-10 family. In terms of assembly, homodimer. Interacts with IL10RA and IL10RB. In terms of tissue distribution, produced by a variety of cell lines, including T-cells, macrophages, mast cells and other cell types.

Its subcellular location is the secreted. Major immune regulatory cytokine that acts on many cells of the immune system where it has profound anti-inflammatory functions, limiting excessive tissue disruption caused by inflammation. Mechanistically, IL10 binds to its heterotetrameric receptor comprising IL10RA and IL10RB leading to JAK1 and STAT2-mediated phosphorylation of STAT3. In turn, STAT3 translocates to the nucleus where it drives expression of anti-inflammatory mediators. Targets antigen-presenting cells (APCs) such as macrophages and monocytes and inhibits their release of pro-inflammatory cytokines including granulocyte-macrophage colony-stimulating factor /GM-CSF, granulocyte colony-stimulating factor/G-CSF, IL-1 alpha, IL-1 beta, IL-6, IL-8 and TNF-alpha. Also interferes with antigen presentation by reducing the expression of MHC-class II and co-stimulatory molecules, thereby inhibiting their ability to induce T cell activation. In addition, controls the inflammatory response of macrophages by reprogramming essential metabolic pathways including mTOR signaling. The protein is Interleukin-10 (IL10) of Homo sapiens (Human).